Consider the following 575-residue polypeptide: Cytochrome P450 monooxygenase opaB (575 aa).

Asn6 is a glycosylation site (N-linked (GlcNAc...) asparagine). A helical membrane pass occupies residues 37–57 (FILAAILASIILLIIRNSMLS). N-linked (GlcNAc...) asparagine glycosylation is found at Asn83 and Asn242. Heme is bound at residue Cys521.

Belongs to the cytochrome P450 family. It depends on heme as a cofactor.

It is found in the membrane. Its pathway is secondary metabolite biosynthesis. Its function is as follows. Cytochrome P450 monooxygenase; part of the gene cluster that mediates the biosynthesis of oxepinamides, derivatives of anthranilyl-containing tripeptides that share an oxepin ring and a fused pyrimidinone moiety. The nonribosomal peptide synthetase (NRPS) opaA assembles the quinazolinone core with D-Phe incorporation. The first adenylation domain (A1) of opaA loads and activates anthranilic acid whereas the second A domain (A2) is for activating of L-Phe, which is then converted to D-form by the E domain. The third A domain (A3) is responsible for L-Ile activation and the terminal condensation domain C3 for cyclization and releasing the NRPS product protuboxepin K. The cytochrome P450 monooxygenase opaB then catalyzes alone the oxepin ring formation to convert protuboxepin K into protuboxepin A. The flavoenzyme opaC installs subsequently one hydroxyl group at the oxepin ring, accompanied by double bond migration, to form 15-epi-oxepinamide E. The epimerase opaE changes the D-Phe residue back to L-form, leading to oxepinamide E, which is further methylated at the hydroxyl group at C-12 by the O-methyltransferase OpaF to yield oxepinamide F. The chain is Cytochrome P450 monooxygenase opaB from Aspergillus ustus.